A 407-amino-acid polypeptide reads, in one-letter code: MTTFSEKEKIQLLADIVELQTENNNEIDVCNYLKDLFDKYDIKSEILKVNEHRANIVAEIGNGSPILALSGHMDVVDAGNQDNWTYPPFQLTEKAGKLYGRGTTDMKGGLMALVITLIELKEQNQLPQGTIRLLATAGEEKEQEGAKLLADKGYLDDVDGLIIAEPTGSGIYYAHKGSMSCKVTATGKAVHSSVPFIGDNAIDTLLEFYNLFKEKYSELKQQDTKHELDVAPMFKSLIGKEISEEDANYASGLTAVCSIINGGKQFNSVPDEASLEFNVRPVPEYDNDFIESFFQNIINDVDSNKLSLDIPSNHRPVTSDKNSKLITTIKDVASSYVEQDEIFVSALVGATDASSFLGDNKDNVDLAIFGPGNPLMAHQIDEYIEKDMYLKYIDIFKEASIKYLKEK.

H72 lines the Zn(2+) pocket. The active site involves D74. Position 105 (D105) interacts with Zn(2+). E139 acts as the Proton acceptor in catalysis. Residues E140, E165, and H378 each coordinate Zn(2+).

It belongs to the peptidase M20A family. Requires Zn(2+) as cofactor. The cofactor is Co(2+).

It catalyses the reaction N-succinyl-(2S,6S)-2,6-diaminopimelate + H2O = (2S,6S)-2,6-diaminopimelate + succinate. Its pathway is amino-acid biosynthesis; L-lysine biosynthesis via DAP pathway; LL-2,6-diaminopimelate from (S)-tetrahydrodipicolinate (succinylase route): step 3/3. This is Probable succinyl-diaminopimelate desuccinylase (dapE) from Staphylococcus aureus (strain MSSA476).